We begin with the raw amino-acid sequence, 377 residues long: Gibberellin 20 oxidase 1 (377 aa).

The 101-residue stretch at 222 to 322 (ENDSIMRLNY…RKSLAFFLCP (101 aa)) folds into the Fe2OG dioxygenase domain. Fe cation contacts are provided by His-247, Asp-249, and His-303. Arg-313 is a catalytic residue.

Belongs to the iron/ascorbate-dependent oxidoreductase family. GA20OX subfamily. Requires Fe(2+) as cofactor. L-ascorbate is required as a cofactor. In terms of tissue distribution, highly expressed in stems and inflorescence tissues. Detected in seeds, roots, leaves and siliques.

It carries out the reaction gibberellin A12 + 2 2-oxoglutarate + 3 O2 + H(+) = gibberellin A9 + 2 succinate + 3 CO2 + 2 H2O. The enzyme catalyses gibberellin A12 + 2-oxoglutarate + O2 = gibberellin A15 + succinate + CO2. The catalysed reaction is gibberellin A15 + 2-oxoglutarate + O2 = gibberellin A24 + succinate + CO2 + H2O. It catalyses the reaction gibberellin A53 + 2-oxoglutarate + O2 = gibberellin A44 + succinate + CO2. The protein operates within plant hormone biosynthesis; gibberellin biosynthesis. Functionally, key oxidase enzyme in the biosynthesis of gibberellin that catalyzes the conversion of GA12 to GA9, via a three-step oxidation at C-20 of the GA skeleton. GA53 is less effectively oxidized than GA12 and is only oxidized one step to GA44. Involved in the promotion of the floral transition, fertility and silique elongation, but plays only a minor role in elongation of seedling organs. Acts redundantly with GA20OX2. The polypeptide is Gibberellin 20 oxidase 1 (GA20OX1) (Arabidopsis thaliana (Mouse-ear cress)).